The chain runs to 800 residues: MRKKRYVWLKSILVAILVFGSGVWINTSNGTNAQAATITQDTPINQIFTDTALAEKMKTVLGKTNVTDTVSQTDLDQVTTLQADRLGIKSIDGVEYLNNLTQINFSNNQLTDITPLKNLTKLVDILMNNNQIADITPLANLTNLTGLTLFNNQITDIDPLKNLTNLNRLELSSNTISDISALSGLTSLQQLSFGNQVTDLKPLANLTTLERLDISSNKVSDISVLAKLTNLESLIATNNQISDITPLGILTNLDELSLNGNQLKDIGTLASLTNLTDLDLANNQISNLAPLSGLTKLTELKLGANQISNISPLAGLTALTNLELNENQLEDISPISNLKNLTYLTLYFNNISDISPVSSLTKLQRLFFYNNKVSDVSSLANLTNINWLSAGHNQISDLTPLANLTRITQLGLNDQAWTNAPVNYKANVSIPNTVKNVTGALIAPATISDGGSYTEPDITWNLPSYTNEVSYTFSQPVTIGKGTTTFSGTVTQPLKAIFNVKFHVDGKETTKEVEAGNLLTEPAKPVKEGHTFVGWFDAQTGGTKWNFSTDKMPTNDINLYAQFSINSYTATFDNDGVTTSQTVDYQGLLQEPTAPTKEGYTFKGWYDAKTGGDKWDFATSKMPAKNITLYAQYSANSYTATFDVDGKSTTQAVDYQGLLKEPKAPTKAGYTFKGWYDEKTDGKKWDFATDKMPANDITLYAQFTKNPVAPPTTGGNTPPTTNNGGNTTPPSANIPGSDTSNTSTGNSASTTSTMNAYDPYNSKEASLPTTGDSDNALYLLLGLLAVGTAMALTKKARASK.

Positions 1–35 are cleaved as a signal peptide; the sequence is MRKKRYVWLKSILVAILVFGSGVWINTSNGTNAQA. One can recognise an LRRNT domain in the interval 36–76; that stretch reads ATITQDTPINQIFTDTALAEKMKTVLGKTNVTDTVSQTDLD. LRR repeat units lie at residues 77–98, 99–120, 121–142, 143–164, 165–186, 187–207, 208–229, 230–251, 252–273, 274–295, 296–317, 318–339, 340–361, 362–383, and 384–405; these read QVTTLQADRLGIKSIDGVEYLN, NLTQINFSNNQLTDITPLKNLT, KLVDILMNNNQIADITPLANLT, NLTGLTLFNNQITDIDPLKNLT, NLNRLELSSNTISDISALSGLT, SLQQLSFGNQVTDLKPLANLT, TLERLDISSNKVSDISVLAKLT, NLESLIATNNQISDITPLGILT, NLDELSLNGNQLKDIGTLASLT, NLTDLDLANNQISNLAPLSGLT, KLTELKLGANQISNISPLAGLT, ALTNLELNENQLEDISPISNLK, NLTYLTLYFNNISDISPVSSLT, KLQRLFFYNNKVSDVSSLANLT, and NINWLSAGHNQISDLTPLANLT. Residues 416 to 505 enclose the LRRCT domain; it reads AWTNAPVNYK…AIFNVKFHVD (90 aa). A B-1 repeat occupies 518 to 587; that stretch reads LLTEPAKPVK…TTSQTVDYQG (70 aa). The tract at residues 518–706 is 3 X approximate tandem repeats, type B; the sequence is LLTEPAKPVK…ITLYAQFTKN (189 aa). One copy of the B-2 repeat lies at 588–657; that stretch reads LLQEPTAPTK…STTQAVDYQG (70 aa). Residues 658 to 706 form a B-3 repeat; it reads LLKEPKAPTKAGYTFKGWYDEKTDGKKWDFATDKMPANDITLYAQFTKN. Residues 705-757 are disordered; it reads KNPVAPPTTGGNTPPTTNNGGNTTPPSANIPGSDTSNTSTGNSASTTSTMNAY. Positions 711 to 753 are enriched in low complexity; sequence PTTGGNTPPTTNNGGNTTPPSANIPGSDTSNTSTGNSASTTST. The LPXTG sorting signal motif lies at 767–771; it reads LPTTG. Position 770 is a pentaglycyl murein peptidoglycan amidated threonine (threonine 770). A propeptide spans 771–800 (removed by sortase A); the sequence is GDSDNALYLLLGLLAVGTAMALTKKARASK.

Belongs to the internalin family. As to quaternary structure, interacts with host (human) cadherin-1 (CDH1). The formation of the complex between inlA and cadherin-1 is calcium-dependent. Mutagenesis studies show it is possible to increase the affinity of InlA for CDH1 by rational engineering of InlA residues.

The protein resides in the secreted. It localises to the cell wall. Bacterial uptake is inhibited by EDTA and by anti-E-cadherin antibodies. Mediates the entry of L.monocytogenes into host intestinal epithelial cells; transformation with inlA alone allows L.innocua (a non-invasive species) to be taken up by host cells. Binds to human receptor cadherin-1 (E-cadherin, CDH1); the chicken homolog of cadherin-1 but not cadherin-2 function as receptors. Mouse cadherin-1 is not a receptor, however mutating a single surface-exposed residue (Glu-172 to Pro in mouse) allows cadherin-1 to act as a receptor for InlA. This is Internalin A from Listeria monocytogenes serovar 1/2a (strain ATCC BAA-679 / EGD-e).